The chain runs to 232 residues: Ion-translocating oxidoreductase complex subunit E (232 aa).

Transmembrane regions (helical) follow at residues glycine 18–alanine 38, leucine 39–valine 59, isoleucine 69–alanine 89, glycine 93–glycine 113, alanine 127–alanine 147, and proline 182–leucine 202.

Belongs to the NqrDE/RnfAE family. As to quaternary structure, the complex is composed of six subunits: RnfA, RnfB, RnfC, RnfD, RnfE and RnfG.

The protein localises to the cell inner membrane. Functionally, part of a membrane-bound complex that couples electron transfer with translocation of ions across the membrane. The chain is Ion-translocating oxidoreductase complex subunit E from Shewanella sp. (strain W3-18-1).